Here is a 356-residue protein sequence, read N- to C-terminus: uncharacterized protein (356 aa).

Positions 25 to 72 (EENNQENNKKFIEEFYPDKESDKNFSDDDSDDSDDSDDSENSDEEFDN) are disordered. Over residues 31-50 (NNKKFIEEFYPDKESDKNFS) the composition is skewed to basic and acidic residues. Residues 51–70 (DDDSDDSDDSDDSENSDEEF) are compositionally biased toward acidic residues. Residues 328 to 356 (EDTLNHSHSNKIKELENKITELKYQNEIN) are a coiled coil.

This sequence belongs to the mimivirus L17/R827 family.

This is an uncharacterized protein from Acanthamoeba polyphaga mimivirus (APMV).